The chain runs to 154 residues: Myoglobin (154 aa).

Residues G2–K148 form the Globin domain. The residue at position 4 (S4) is a Phosphoserine. H65 serves as a coordination point for nitrite. H65 contributes to the O2 binding site. Position 68 is a phosphothreonine (T68). Heme b is bound at residue H94.

It belongs to the globin family. In terms of assembly, monomeric.

It localises to the cytoplasm. The protein resides in the sarcoplasm. It catalyses the reaction Fe(III)-heme b-[protein] + nitric oxide + H2O = Fe(II)-heme b-[protein] + nitrite + 2 H(+). It carries out the reaction H2O2 + AH2 = A + 2 H2O. Its function is as follows. Monomeric heme protein which primary function is to store oxygen and facilitate its diffusion within muscle tissues. Reversibly binds oxygen through a pentacoordinated heme iron and enables its timely and efficient release as needed during periods of heightened demand. Depending on the oxidative conditions of tissues and cells, and in addition to its ability to bind oxygen, it also has a nitrite reductase activity whereby it regulates the production of bioactive nitric oxide. Under stress conditions, like hypoxia and anoxia, it also protects cells against reactive oxygen species thanks to its pseudoperoxidase activity. In Globicephala melas (Long-finned pilot whale), this protein is Myoglobin (MB).